We begin with the raw amino-acid sequence, 54 residues long: MAVPKKRVSKSKRDMRKTTWKNKASKEAKKALSLAKSVSTGKSKSKGFQIKSSN.

A compositionally biased stretch (basic residues) spans 1–20 (MAVPKKRVSKSKRDMRKTTW). The segment at 1–54 (MAVPKKRVSKSKRDMRKTTWKNKASKEAKKALSLAKSVSTGKSKSKGFQIKSSN) is disordered. Over residues 31–42 (ALSLAKSVSTGK) the composition is skewed to low complexity.

It belongs to the bacterial ribosomal protein bL32 family.

The protein resides in the plastid. It is found in the chloroplast. This Chlorokybus atmophyticus (Soil alga) protein is Large ribosomal subunit protein bL32c.